The following is a 90-amino-acid chain: MNSNLLLPDKNLRMQREQWKWTQMTLIKTHCKPGNKQCQHWRTNSQTTREGWQMLCPGKKWILNLLTRLGLNLMTTSRRDQALGMEMSLM.

This sequence belongs to the hantavirus NS-S protein family.

Its subcellular location is the host cytoplasm. The protein localises to the host perinuclear region. Its function is as follows. Antagonizes host type-I IFN signaling pathway. In Homo sapiens (Human), this protein is Non-structural protein NS-S (N).